Reading from the N-terminus, the 178-residue chain is Pyruvate synthase subunit PorC (178 aa).

In terms of assembly, heterotetramer of one alpha, one beta, one delta and one gamma chain.

The enzyme catalyses 2 oxidized [2Fe-2S]-[ferredoxin] + pyruvate + CoA = 2 reduced [2Fe-2S]-[ferredoxin] + acetyl-CoA + CO2 + H(+). The chain is Pyruvate synthase subunit PorC (porC) from Methanocaldococcus jannaschii (strain ATCC 43067 / DSM 2661 / JAL-1 / JCM 10045 / NBRC 100440) (Methanococcus jannaschii).